Reading from the N-terminus, the 119-residue chain is Ribonuclease P protein component (119 aa).

This sequence belongs to the RnpA family. Consists of a catalytic RNA component (M1 or rnpB) and a protein subunit.

The enzyme catalyses Endonucleolytic cleavage of RNA, removing 5'-extranucleotides from tRNA precursor.. RNaseP catalyzes the removal of the 5'-leader sequence from pre-tRNA to produce the mature 5'-terminus. It can also cleave other RNA substrates such as 4.5S RNA. The protein component plays an auxiliary but essential role in vivo by binding to the 5'-leader sequence and broadening the substrate specificity of the ribozyme. This Beutenbergia cavernae (strain ATCC BAA-8 / DSM 12333 / CCUG 43141 / JCM 11478 / NBRC 16432 / NCIMB 13614 / HKI 0122) protein is Ribonuclease P protein component.